A 318-amino-acid chain; its full sequence is Ankyrin repeat and SOCS box protein 7 (318 aa).

ANK repeat units follow at residues 13–42 (QEELQIQAAVAAGDVHTVRKMLEQGYSPNG), 46–75 (NGWTLLHFSAARGKERCVRVFLEHGADPTV), 80–109 (GGFTALHYAAMHGRARIARLMLESEYRSDI), 116–145 (DGWTPLHVAAHYGRDSFVRLLLEFKAEVDP), 149–178 (KGTTPLQLAIIRERSSCVKILLDHNANIDI), 180–208 (NGFLLRYAVIKSNHSYCRMFLQRGADTNL), and 213–242 (DGQTPLHLSALRDDVLCARMLYNYGADTNT). An SOCS box domain is found at 265–318 (LDFLQDVTRQPRTLQDLCRIKIRQCIGLQNLKLLDELPIAKVMKDYLKHKFDDI).

The protein belongs to the ankyrin SOCS box (ASB) family. Interacts with CUL5. Interacts with RNF7. Interacts with PSRC1.

Its subcellular location is the nucleus. The protein localises to the cytoplasm. It functions in the pathway protein modification; protein ubiquitination. Its function is as follows. Probable substrate-recognition component of a SCF-like ECS (Elongin-Cullin-SOCS-box protein) E3 ubiquitin-protein ligase complex which mediates the ubiquitination and subsequent proteasomal degradation of target proteins. Plays a role in spindle dynamics and genome integrity by targeting the mitotic progression protein PSRC1 for proteasomal degradation in a cell cycle-dependent manner. Also participates in meiosis by mediating the proper attachment between kinetochores and microtubules. The protein is Ankyrin repeat and SOCS box protein 7 (Asb7) of Mus musculus (Mouse).